The following is a 194-amino-acid chain: Protein GrpE (194 aa).

The tract at residues 1–53 is disordered; that stretch reads MVENEKTSVEETEEKAETEDEMLTEDPSNEDSDEANEEGNELSEEEKRIAELE. Residues 10–44 are compositionally biased toward acidic residues; the sequence is EETEEKAETEDEMLTEDPSNEDSDEANEEGNELSE.

It belongs to the GrpE family. In terms of assembly, homodimer.

The protein localises to the cytoplasm. Functionally, participates actively in the response to hyperosmotic and heat shock by preventing the aggregation of stress-denatured proteins, in association with DnaK and GrpE. It is the nucleotide exchange factor for DnaK and may function as a thermosensor. Unfolded proteins bind initially to DnaJ; upon interaction with the DnaJ-bound protein, DnaK hydrolyzes its bound ATP, resulting in the formation of a stable complex. GrpE releases ADP from DnaK; ATP binding to DnaK triggers the release of the substrate protein, thus completing the reaction cycle. Several rounds of ATP-dependent interactions between DnaJ, DnaK and GrpE are required for fully efficient folding. The protein is Protein GrpE of Halalkalibacterium halodurans (strain ATCC BAA-125 / DSM 18197 / FERM 7344 / JCM 9153 / C-125) (Bacillus halodurans).